Here is a 37-residue protein sequence, read N- to C-terminus: Tick defensin 2 (37 aa).

3 cysteine pairs are disulfide-bonded: C4-C26, C11-C34, and C15-C36.

The protein belongs to the invertebrate defensin family.

The protein resides in the secreted. Its function is as follows. Antibacterial peptide mostly active against Gram-positive bacteria (MIC=0.24 ug/ml on Bacillus subtilis, and MIC=0.94 ug/ml on Micrococcus luteus, MIC&gt;120 ug/ml on both Escherichia coli and Pseudomonas aeruginosa). This Ornithodoros savignyi (African eyed tampan) protein is Tick defensin 2.